We begin with the raw amino-acid sequence, 142 residues long: Metallothiol transferase FosB (142 aa).

Positions 5 to 120 (NVNHICFSVS…DGHKIELHTG (116 aa)) constitute a VOC domain. Residues H8, H67, and E116 each coordinate Mg(2+). The active-site Proton donor/acceptor is the E116.

Belongs to the fosfomycin resistance protein family. FosB subfamily. As to quaternary structure, homodimer. Mg(2+) serves as cofactor.

The protein localises to the cytoplasm. In terms of biological role, metallothiol transferase which confers resistance to fosfomycin by catalyzing the addition of a thiol cofactor to fosfomycin. L-cysteine is probably the physiological thiol donor. The chain is Metallothiol transferase FosB from Staphylococcus epidermidis (strain ATCC 35984 / DSM 28319 / BCRC 17069 / CCUG 31568 / BM 3577 / RP62A).